Here is a 682-residue protein sequence, read N- to C-terminus: Potassium-transporting ATPase ATP-binding subunit (682 aa).

Transmembrane regions (helical) follow at residues 34-54 (PVMF…LAMV), 58-78 (IAGS…TVLF), 219-239 (IALT…TATL), and 254-274 (VLVA…LSAI). The active-site 4-aspartylphosphate intermediate is the D307. Residues D344, E348, 377 to 384 (FTAQSRMS), and K395 contribute to the ATP site. Mg(2+)-binding residues include D518 and D522. 3 consecutive transmembrane segments (helical) span residues 588 to 608 (FAII…LNVM), 616 to 636 (AILS…PLAL), and 662 to 682 (LVVP…LGLA).

It belongs to the cation transport ATPase (P-type) (TC 3.A.3) family. Type IA subfamily. In terms of assembly, the system is composed of three essential subunits: KdpA, KdpB and KdpC.

Its subcellular location is the cell inner membrane. It catalyses the reaction K(+)(out) + ATP + H2O = K(+)(in) + ADP + phosphate + H(+). Part of the high-affinity ATP-driven potassium transport (or Kdp) system, which catalyzes the hydrolysis of ATP coupled with the electrogenic transport of potassium into the cytoplasm. This subunit is responsible for energy coupling to the transport system and for the release of the potassium ions to the cytoplasm. In Salmonella enteritidis PT4 (strain P125109), this protein is Potassium-transporting ATPase ATP-binding subunit.